A 1110-amino-acid polypeptide reads, in one-letter code: Ribosome assembly protein 1 (1110 aa).

The tr-type G domain maps to 17-262 (SCIRNICIVA…QKLGAKRENL (246 aa)). Residues 26–33 (AHVDHGKT), 102–106 (DSPGH), and 156–159 (NKID) each bind GTP. Ser-431 carries the phosphoserine modification.

It belongs to the TRAFAC class translation factor GTPase superfamily. Classic translation factor GTPase family.

It is found in the cytoplasm. The catalysed reaction is GTP + H2O = GDP + phosphate + H(+). With respect to regulation, GTPase activity is stimulated in the presence of 60S subunits. In terms of biological role, GTPase involved in the biogenesis of the 60S ribosomal subunit and translational activation of ribosomes. Together with SDO1, may trigger the GTP-dependent release of TIF6 from 60S pre-ribosomes in the cytoplasm, thereby activating ribosomes for translation competence by allowing 80S ribosome assembly and facilitating TIF6 recycling to the nucleus, where it is required for 60S rRNA processing and nuclear export. Inhibits GTPase activity of ribosome-bound EF-2. The protein is Ribosome assembly protein 1 (RIA1) of Saccharomyces cerevisiae (strain ATCC 204508 / S288c) (Baker's yeast).